The chain runs to 261 residues: Serine acetyltransferase (261 aa).

Belongs to the transferase hexapeptide repeat family.

It is found in the cytoplasm. It catalyses the reaction L-serine + acetyl-CoA = O-acetyl-L-serine + CoA. It functions in the pathway amino-acid biosynthesis; L-cysteine biosynthesis; L-cysteine from L-serine: step 1/2. This chain is Serine acetyltransferase (cysE), found in Buchnera aphidicola subsp. Schizaphis graminum (strain Sg).